The primary structure comprises 408 residues: Zinc-regulated transporter 1 (408 aa).

The next 3 membrane-spanning stretches (helical) occupy residues Ile-64–Leu-84, Leu-101–Ala-121, and Trp-141–Asn-161. Thr-234 and Thr-237 each carry phosphothreonine. 5 helical membrane passes run Phe-254–Val-274, Phe-279–Ser-299, Trp-315–Val-335, Gly-351–Ala-371, and Leu-387–Trp-407.

It belongs to the ZIP transporter (TC 2.A.5) family.

It localises to the endoplasmic reticulum membrane. Functionally, high-affinity zinc transport protein. Regulates intracellular zinc levels. The chain is Zinc-regulated transporter 1 (zrt1) from Schizosaccharomyces pombe (strain 972 / ATCC 24843) (Fission yeast).